Consider the following 521-residue polypeptide: Chromaffin granule amine transporter (521 aa).

Residues 1 to 21 are Cytoplasmic-facing; the sequence is MLQVVLGAPQRLLKEGRQSRK. The chain crosses the membrane as a helical span at residues 22–42; the sequence is LVLVVVFVALLLDNMLLTVVV. Residues 43 to 135 are Lumenal, vesicle-facing; the sequence is PIVPTFLYAT…IEFLEEENVR (93 aa). 3 N-linked (GlcNAc...) asparagine glycosylation sites follow: asparagine 58, asparagine 87, and asparagine 104. Residues 136 to 155 traverse the membrane as a helical segment; that stretch reads IGILFASKALMQLLVNPFVG. Over 156 to 164 the chain is Cytoplasmic; sequence PLTNRIGYH. Residues 165–185 form a helical membrane-spanning segment; the sequence is IPMFVGFMIMFLSTLMFAFSG. At 186 to 194 the chain is on the lumenal, vesicle side; that stretch reads TYALLFVAR. Residues 195-215 form a helical membrane-spanning segment; sequence TLQGIGSSFSSVAGLGMLASV. Residues 216–224 lie on the Cytoplasmic side of the membrane; that stretch reads YTDNYERGR. The chain crosses the membrane as a helical span at residues 225–247; sequence AMGIALGGLALGLLVGAPFGSVM. Residues 248 to 253 are Lumenal, vesicle-facing; the sequence is YEFVGK. A helical membrane pass occupies residues 254 to 276; that stretch reads SSPFLILAFLALLDGALQLCILW. Residues 277-296 are Cytoplasmic-facing; the sequence is PSKVSPESAMGTSLLTLLKD. Residues 297 to 316 form a helical membrane-spanning segment; the sequence is PYILVAAGSICLANMGVAIL. Topologically, residues 317–332 are lumenal, vesicle; sequence EPTLPIWMMQTMCSPE. Residues 333–357 form a helical membrane-spanning segment; the sequence is WQLGLAFLPASVAYLIGTNLFGVLA. At 358-362 the chain is on the cytoplasmic side; that stretch reads NKMGR. The chain crosses the membrane as a helical span at residues 363 to 383; sequence WLCSLVGMVAVGISLLCVPLA. The Lumenal, vesicle segment spans residues 384-394; that stretch reads HNIFGLIGPNA. Residues 395–415 form a helical membrane-spanning segment; the sequence is GLGFAIGMVDSSLMPIMGYLV. Residues 416–419 lie on the Cytoplasmic side of the membrane; that stretch reads DLRH. Residues 420–440 form a helical membrane-spanning segment; it reads TSVYGSVYAIADVAFCVGFAI. Topologically, residues 441–445 are lumenal, vesicle; sequence GPSTG. A helical membrane pass occupies residues 446-467; sequence GVIVQVIGFPWLMVIIGTINII. The Cytoplasmic segment spans residues 468–521; it reads YAPLCCFLQNPPAKEEKRAILSQECPTETQMYTFQKPTKAFPLGENSDDPSSGE.

It belongs to the major facilitator superfamily. Vesicular transporter family. As to expression, adrenal gland.

It is found in the cytoplasmic vesicle. The protein localises to the secretory vesicle membrane. It localises to the secretory vesicle. Its subcellular location is the synaptic vesicle membrane. The catalysed reaction is serotonin(in) + 2 H(+)(out) = serotonin(out) + 2 H(+)(in). It catalyses the reaction (R)-noradrenaline(in) + 2 H(+)(out) = (R)-noradrenaline(out) + 2 H(+)(in). It carries out the reaction dopamine(in) + 2 H(+)(out) = dopamine(out) + 2 H(+)(in). Strongly inhibited by reserpine, ketanserin and methamphetamine. Also inhibited weakly by tetrabenazine. Its function is as follows. Electrogenic antiporter that exchanges one cationic monoamine with two intravesicular protons across the membrane of secretory and synaptic vesicles. Uses the electrochemical proton gradient established by the V-type proton-pump ATPase to accumulate high concentrations of monoamines inside the vesicles prior to their release via exocytosis. Transports catecholamines and indolamines with higher affinity for serotonin. Regulates the transvesicular monoaminergic gradient that determines the quantal size. Mediates presynaptic monoaminergic vesicle transport in the amygdala and prefrontal brain regions related with emotion processing in response to environmental stimuli. The sequence is that of Chromaffin granule amine transporter (Slc18a1) from Rattus norvegicus (Rat).